A 311-amino-acid chain; its full sequence is Ribosomal RNA small subunit methyltransferase H (311 aa).

S-adenosyl-L-methionine-binding positions include 32–34 (AGH), Asp52, Phe79, Asp100, and Gln107.

This sequence belongs to the methyltransferase superfamily. RsmH family.

The protein localises to the cytoplasm. The enzyme catalyses cytidine(1402) in 16S rRNA + S-adenosyl-L-methionine = N(4)-methylcytidine(1402) in 16S rRNA + S-adenosyl-L-homocysteine + H(+). Specifically methylates the N4 position of cytidine in position 1402 (C1402) of 16S rRNA. The chain is Ribosomal RNA small subunit methyltransferase H from Staphylococcus haemolyticus (strain JCSC1435).